The following is a 550-amino-acid chain: MISDNIKKGVIRSPNRALLKACGYTDEDMEKPFIGVVNSFTDVVPGHIHLRTLAEAVKNGVYANGGTPFEFNTIGICDGIAMGHEGMKYSLPSREIIADAVESMARAHGFDGLVLIPTCDKIVPGMIMGALRLNIPFIVVTGGPMLPGEFQGKKYELISLFEGVGQYQVGKISEEELKCIEDCACSGAGSCAGLYTANSMACLTEALGLSLPMCATTHAVDAQKVRIAKKSGSKIVDLVKQDIKPKDILTKEAFENAILVDLALGGSTNTTLHIPAIANEIENKFITLDDFDRLSDEVPHIASIKPGGEHFMIDLHNAGGIPAVFNVLKEKIRDTNTVSGKTTLEIAKEVKYINYDVIRKTEAPVHETAGLRVLKGNIAPNGCVVKIGAVNPKMYKHEGPAKVFNSEDDAISAILGGKIVSGDVIVIRYEGPSGGPGMREMLSPTSAICGMGLDDSVALITDGRFSGGSRGPCIGHISPEAMAGGLIAVINDGDTIKIDMIGKKINVELNNSEIENRLKSLKIPEPKVKTGYLSRYSRLVSSADEGAVLK.

Aspartate 78 contacts Mg(2+). Cysteine 119 lines the [2Fe-2S] cluster pocket. Mg(2+)-binding residues include aspartate 120 and lysine 121. Residue lysine 121 is modified to N6-carboxylysine. Cysteine 191 lines the [2Fe-2S] cluster pocket. Glutamate 440 contributes to the Mg(2+) binding site. The active-site Proton acceptor is the serine 466.

This sequence belongs to the IlvD/Edd family. As to quaternary structure, homodimer. It depends on [2Fe-2S] cluster as a cofactor. Requires Mg(2+) as cofactor.

The catalysed reaction is (2R)-2,3-dihydroxy-3-methylbutanoate = 3-methyl-2-oxobutanoate + H2O. It carries out the reaction (2R,3R)-2,3-dihydroxy-3-methylpentanoate = (S)-3-methyl-2-oxopentanoate + H2O. It participates in amino-acid biosynthesis; L-isoleucine biosynthesis; L-isoleucine from 2-oxobutanoate: step 3/4. Its pathway is amino-acid biosynthesis; L-valine biosynthesis; L-valine from pyruvate: step 3/4. In terms of biological role, functions in the biosynthesis of branched-chain amino acids. Catalyzes the dehydration of (2R,3R)-2,3-dihydroxy-3-methylpentanoate (2,3-dihydroxy-3-methylvalerate) into 2-oxo-3-methylpentanoate (2-oxo-3-methylvalerate) and of (2R)-2,3-dihydroxy-3-methylbutanoate (2,3-dihydroxyisovalerate) into 2-oxo-3-methylbutanoate (2-oxoisovalerate), the penultimate precursor to L-isoleucine and L-valine, respectively. This is Dihydroxy-acid dehydratase from Methanococcus vannielii (strain ATCC 35089 / DSM 1224 / JCM 13029 / OCM 148 / SB).